A 508-amino-acid chain; its full sequence is Glycerol kinase (508 aa).

Threonine 14 is an ADP binding site. Positions 14, 15, and 16 each coordinate ATP. Threonine 14 provides a ligand contact to sn-glycerol 3-phosphate. Arginine 18 contacts ADP. Sn-glycerol 3-phosphate-binding residues include arginine 84, glutamate 85, tyrosine 136, and aspartate 245. Residues arginine 84, glutamate 85, tyrosine 136, aspartate 245, and glutamine 246 each contribute to the glycerol site. ADP-binding residues include threonine 267 and glycine 314. Residues threonine 267, glycine 314, glutamine 318, and glycine 415 each contribute to the ATP site. ADP is bound by residues glycine 415 and asparagine 419.

It belongs to the FGGY kinase family.

It carries out the reaction glycerol + ATP = sn-glycerol 3-phosphate + ADP + H(+). Its pathway is polyol metabolism; glycerol degradation via glycerol kinase pathway; sn-glycerol 3-phosphate from glycerol: step 1/1. Its activity is regulated as follows. Inhibited by fructose 1,6-bisphosphate (FBP). In terms of biological role, key enzyme in the regulation of glycerol uptake and metabolism. Catalyzes the phosphorylation of glycerol to yield sn-glycerol 3-phosphate. This is Glycerol kinase from Bordetella parapertussis (strain 12822 / ATCC BAA-587 / NCTC 13253).